We begin with the raw amino-acid sequence, 34 residues long: Non-cysteinic peptide Bs 10 (34 aa).

The segment at 1 to 34 is disordered; it reads VTMGYIKDGDGKKIAKKKNKNGRKHVEIDLNKVG. Residues 14-23 are compositionally biased toward basic residues; the sequence is IAKKKNKNGR. Basic and acidic residues predominate over residues 24 to 34; that stretch reads KHVEIDLNKVG.

In terms of tissue distribution, expressed by the venom gland.

The protein localises to the secreted. The chain is Non-cysteinic peptide Bs 10 from Hottentotta tamulus sindicus (Scorpion).